Reading from the N-terminus, the 557-residue chain is 2-isopropylmalate synthase (557 aa).

One can recognise a Pyruvate carboxyltransferase domain in the interval 33–307; the sequence is PIWCSSDLRD…DPQLDFSDID (275 aa). Residues aspartate 42, histidine 246, histidine 248, and asparagine 282 each contribute to the Mg(2+) site. A regulatory domain region spans residues 439 to 557; it reads ANSPYALVSH…SLSQQEAKAA (119 aa).

It belongs to the alpha-IPM synthase/homocitrate synthase family. LeuA type 2 subfamily. As to quaternary structure, homodimer. The cofactor is Mg(2+).

The protein resides in the cytoplasm. It carries out the reaction 3-methyl-2-oxobutanoate + acetyl-CoA + H2O = (2S)-2-isopropylmalate + CoA + H(+). Its pathway is amino-acid biosynthesis; L-leucine biosynthesis; L-leucine from 3-methyl-2-oxobutanoate: step 1/4. In terms of biological role, catalyzes the condensation of the acetyl group of acetyl-CoA with 3-methyl-2-oxobutanoate (2-ketoisovalerate) to form 3-carboxy-3-hydroxy-4-methylpentanoate (2-isopropylmalate). The sequence is that of 2-isopropylmalate synthase from Pseudomonas putida (strain W619).